A 152-amino-acid chain; its full sequence is D-aminoacyl-tRNA deacylase (152 aa).

A Gly-cisPro motif, important for rejection of L-amino acids motif is present at residues 142–143; it reads GP.

Belongs to the DTD family. As to quaternary structure, homodimer.

It localises to the cytoplasm. It catalyses the reaction glycyl-tRNA(Ala) + H2O = tRNA(Ala) + glycine + H(+). The enzyme catalyses a D-aminoacyl-tRNA + H2O = a tRNA + a D-alpha-amino acid + H(+). Functionally, an aminoacyl-tRNA editing enzyme that deacylates mischarged D-aminoacyl-tRNAs. Also deacylates mischarged glycyl-tRNA(Ala), protecting cells against glycine mischarging by AlaRS. Acts via tRNA-based rather than protein-based catalysis; rejects L-amino acids rather than detecting D-amino acids in the active site. By recycling D-aminoacyl-tRNA to D-amino acids and free tRNA molecules, this enzyme counteracts the toxicity associated with the formation of D-aminoacyl-tRNA entities in vivo and helps enforce protein L-homochirality. This is D-aminoacyl-tRNA deacylase from Paraburkholderia phymatum (strain DSM 17167 / CIP 108236 / LMG 21445 / STM815) (Burkholderia phymatum).